The following is a 182-amino-acid chain: Ribosome-recycling factor (182 aa).

The disordered stretch occupies residues 136 to 158; the sequence is IKKQEKEGDLSEDQSRDEQDQVQ.

The protein belongs to the RRF family.

It localises to the cytoplasm. In terms of biological role, responsible for the release of ribosomes from messenger RNA at the termination of protein biosynthesis. May increase the efficiency of translation by recycling ribosomes from one round of translation to another. The sequence is that of Ribosome-recycling factor from Synechococcus sp. (strain CC9311).